The following is a 74-amino-acid chain: MPVQRKRRIKLCPLCADGVREVDYKDVNRLRRFTSDRGKILPRRVTGVCAFHQRSLSRAIKRAREMALLPYVMQ.

It belongs to the bacterial ribosomal protein bS18 family. In terms of assembly, part of the 30S ribosomal subunit. Forms a tight heterodimer with protein bS6.

In terms of biological role, binds as a heterodimer with protein bS6 to the central domain of the 16S rRNA, where it helps stabilize the platform of the 30S subunit. This chain is Small ribosomal subunit protein bS18, found in Coprothermobacter proteolyticus (strain ATCC 35245 / DSM 5265 / OCM 4 / BT).